We begin with the raw amino-acid sequence, 389 residues long: Phosphoglycerate kinase (389 aa).

Residues 21–23 (DLN), R36, 59–62 (HLGR), R112, and R145 contribute to the substrate site. ATP contacts are provided by residues K196, E318, and 344–347 (GGDS).

The protein belongs to the phosphoglycerate kinase family. In terms of assembly, monomer.

The protein localises to the cytoplasm. The catalysed reaction is (2R)-3-phosphoglycerate + ATP = (2R)-3-phospho-glyceroyl phosphate + ADP. It participates in carbohydrate degradation; glycolysis; pyruvate from D-glyceraldehyde 3-phosphate: step 2/5. The polypeptide is Phosphoglycerate kinase (Desulfovibrio desulfuricans (strain ATCC 27774 / DSM 6949 / MB)).